A 773-amino-acid chain; its full sequence is MSTTHVLGYPRIGARRELKRATEAYWKGEIDQAELERTGRELRARHWQAQRDAGLDWVTVGDFAFYDHVLNVSALLGAVPPRFGDAGETVDLDTTFRMARGRAPTGEPAAACEMTKYFDTNYHYLVPELHADQRFGLASRRLFDEVAEARAAGHPVKVVLTGPLTWLWLGKAKSPGLDRLDLLDGVVDVYGEILQQLGEQGVEWVQLDEPALVQDLPADWQQAYERAYHRLQAGPVKLLLATYFGGLGENLSTALNLPVDGIHIDCVRDPDQLTAVLDRLLPHKVLSLGVIDGRNVWRSDLAALARTLAPVRERLGERLWLAPSCSLLHVPVDLDLETELQPQLRRWLAFARQKLDELVVLGRLLGDRAGAADEQAAAEASAALADRQASTHIHKAEVAERMQRVGPADRQRGQPYPERARKQRKRLALPLFPTTTIGSFPQTAEIRAARRDLKAGRLTPEAYEARMREEIAFAVARQEEIGLDVLVHGEAERNDMVEYFGEQLDGFAFTRAGWVQSYGSRCVKPPIIYGDVSRPRPMTVRWSEYAQSLTGRPMKGMLTGPVTVLQWSFVRDDQPRSETCRQIALALRDEVADLEAAGIPAIQIDEPALREGLPLQQRQWPGYLDWAVDCFRLTASVAQDATQIHTHMCYSEFNDIMGAIATLDADVITIETSRSDMELLEVFEGFEYPNEIGPGVYDIHSPNTPSVDWMVRLMEKAARRIPVERLWVNPDCGLKTRAWAEVEPALQNMVAAAEILRERYGQAQTRVATQGKR.

Residues 16–19 and lysine 116 contribute to the 5-methyltetrahydropteroyltri-L-glutamate site; that span reads RELK. Residues 437–439 and glutamate 490 contribute to the L-homocysteine site; that span reads IGS. L-methionine is bound by residues 437-439 and glutamate 490; that span reads IGS. 5-methyltetrahydropteroyltri-L-glutamate-binding positions include 521-522 and tryptophan 567; that span reads RC. Aspartate 605 is a binding site for L-homocysteine. Aspartate 605 contributes to the L-methionine binding site. Glutamate 611 provides a ligand contact to 5-methyltetrahydropteroyltri-L-glutamate. Zn(2+)-binding residues include histidine 647, cysteine 649, and glutamate 671. Histidine 700 functions as the Proton donor in the catalytic mechanism. Position 732 (cysteine 732) interacts with Zn(2+).

The protein belongs to the vitamin-B12 independent methionine synthase family. Requires Zn(2+) as cofactor.

The catalysed reaction is 5-methyltetrahydropteroyltri-L-glutamate + L-homocysteine = tetrahydropteroyltri-L-glutamate + L-methionine. Its pathway is amino-acid biosynthesis; L-methionine biosynthesis via de novo pathway; L-methionine from L-homocysteine (MetE route): step 1/1. In terms of biological role, catalyzes the transfer of a methyl group from 5-methyltetrahydrofolate to homocysteine resulting in methionine formation. The polypeptide is 5-methyltetrahydropteroyltriglutamate--homocysteine methyltransferase (Alkalilimnicola ehrlichii (strain ATCC BAA-1101 / DSM 17681 / MLHE-1)).